A 101-amino-acid polypeptide reads, in one-letter code: NAD(P)H-quinone oxidoreductase subunit 4L, chloroplastic (101 aa).

The next 3 membrane-spanning stretches (helical) occupy residues 2-22 (MLEH…YGLI), 32-52 (MCLE…SDFF), and 61-81 (IFSI…PAIV).

It belongs to the complex I subunit 4L family. As to quaternary structure, NDH is composed of at least 16 different subunits, 5 of which are encoded in the nucleus.

It localises to the plastid. It is found in the chloroplast thylakoid membrane. It carries out the reaction a plastoquinone + NADH + (n+1) H(+)(in) = a plastoquinol + NAD(+) + n H(+)(out). It catalyses the reaction a plastoquinone + NADPH + (n+1) H(+)(in) = a plastoquinol + NADP(+) + n H(+)(out). Functionally, NDH shuttles electrons from NAD(P)H:plastoquinone, via FMN and iron-sulfur (Fe-S) centers, to quinones in the photosynthetic chain and possibly in a chloroplast respiratory chain. The immediate electron acceptor for the enzyme in this species is believed to be plastoquinone. Couples the redox reaction to proton translocation, and thus conserves the redox energy in a proton gradient. This is NAD(P)H-quinone oxidoreductase subunit 4L, chloroplastic from Manihot esculenta (Cassava).